A 135-amino-acid polypeptide reads, in one-letter code: Large ribosomal subunit protein eL32 (135 aa).

The protein belongs to the eukaryotic ribosomal protein eL32 family.

This is Large ribosomal subunit protein eL32 (rpl32e) from Methanococcus maripaludis (strain DSM 14266 / JCM 13030 / NBRC 101832 / S2 / LL).